The following is a 142-amino-acid chain: uncharacterized protein (142 aa).

Asn-29 and Asn-67 each carry an N-linked (GlcNAc...) asparagine; by host glycan. Residues 88–108 traverse the membrane as a helical segment; that stretch reads VFYLGYPVIFIIGVTYFSIIA.

The protein resides in the membrane. This is an uncharacterized protein from Acanthamoeba polyphaga mimivirus (APMV).